A 1437-amino-acid polypeptide reads, in one-letter code: Envelopment polyprotein (1437 aa).

The first 21 residues, 1 to 21 (MAISTSLLIVALLIKLCLVNT), serve as a signal peptide directing secretion. The Lumenal portion of the chain corresponds to 22–207 (APPISKCFQD…GYMASSICQN (186 aa)). N-linked (GlcNAc...) asparagine; by host glycosylation is found at Asn-65 and Asn-88. Residues 208 to 228 (IELIIIIILTLAIFIFMCIIT) form a helical membrane-spanning segment. At 229–312 (RTYICYLMLP…RVARSLCKSK (84 aa)) the chain is on the cytoplasmic side. A helical membrane pass occupies residues 313–333 (GSSLVISILTAMLILSFITPL). The Lumenal portion of the chain corresponds to 334–373 (EAMTTNYPDDKKFTLKEVNDIVLGRDMEQELKSSILILMS). A helical membrane pass occupies residues 374 to 394 (ICGIGIILIFFGLTVLLEIVL). Over 395-460 (ELIAKRSTIF…TYYIKIRNLK (66 aa)) the chain is Cytoplasmic. The helical transmembrane segment at 461–481 (LIMLIFSIVILMQNATMLVVA) threads the bilayer. Over 482-1391 (GENCWTNTEI…EPLNNFFGNY (910 aa)) the chain is Lumenal. Asn-627 and Asn-1173 each carry an N-linked (GlcNAc...) asparagine; by host glycan. A helical transmembrane segment spans residues 1392 to 1412 (LNMFLYILGGIILLFLALYIL). The Cytoplasmic segment spans residues 1413–1437 (MPMCARLRDELKRNERLHQMEMKKR).

The protein belongs to the orthobunyavirus envelope glycoprotein family. As to quaternary structure, glycoprotein C and Glycoprotein N interact with each other. Post-translationally, specific enzymatic cleavages in vivo yield mature proteins including nonstructural protein NSm, Glycoprotein C, and Glycoprotein N.

The protein localises to the virion membrane. It localises to the host Golgi apparatus membrane. It is found in the host endoplasmic reticulum membrane. Functionally, glycoprotein C and Glycoprotein N interact with each other and are present at the surface of the virion. They are able to attach the virion to a cell receptor and to promote fusion of membranes after endocytosis of the virion. The sequence is that of Envelopment polyprotein (GP) from Culex.